The primary structure comprises 696 residues: DNA topoisomerase 6 subunit B (696 aa).

Residues 1–36 (MDDDAGDGAASGGTKRKVTAASSSAAAKGKAAGKGK) form a disordered region. A compositionally biased stretch (low complexity) spans 20–36 (AASSSAAAKGKAAGKGK). Residues N88, D187, 208–209 (TK), 217–224 (GKFGLGAK), and K543 each bind ATP.

The protein belongs to the TOP6B family. As to quaternary structure, homodimer. Heterotetramer of two TOP6A and two TOP6B subunits. Interacts with SPO11-4.

It is found in the nucleus. The enzyme catalyses ATP-dependent breakage, passage and rejoining of double-stranded DNA.. Component of the DNA topoisomerase VI involved in chromatin organization and progression of endoreduplication cycles. Relaxes both positive and negative superturns and exhibits a strong decatenase activity. The B subunit binds ATP. The chain is DNA topoisomerase 6 subunit B (TOP6B) from Oryza sativa subsp. japonica (Rice).